The primary structure comprises 322 residues: Germ cell-specific gene 1-like protein (322 aa).

At 1 to 8 (MKTSRRGR) the chain is on the cytoplasmic side. The chain crosses the membrane as a helical span at residues 9–29 (ALLAVALNLLALLFATTAFLT). Residues 30–122 (TYWCQGTQRV…FIDLAPASEK (93 aa)) lie on the Extracellular side of the membrane. Residues 123–143 (GVLWLSVVSEVLYILLLVVGF) traverse the membrane as a helical segment. The Cytoplasmic segment spans residues 144-163 (SLMCLELVHSSSVIDGLKLN). Residues 164-184 (AFAAVFTVLSGLLGMVAHMMY) traverse the membrane as a helical segment. Residues 185 to 207 (TQVFQVTVSLGPEDWRPHSWDYG) are Extracellular-facing. Residues 208-228 (WSFCLAWGSFTCCMAASVTTL) form a helical membrane-spanning segment. At 229 to 322 (NSYTKTVIEF…RQCWVLGHWV (94 aa)) the chain is on the cytoplasmic side. Ser-274 is subject to Phosphoserine.

It belongs to the GSG1 family. As to quaternary structure, component of the inner core of AMPAR complexes. AMPAR complexes consist of an inner core made of 4 pore-forming GluA/GRIA proteins (GRIA1, GRIA2, GRIA3 and GRIA4) and 4 major auxiliary subunits arranged in a twofold symmetry. One of the two pairs of distinct binding sites is occupied either by CNIH2, CNIH3 or CACNG2, CACNG3. The other harbors CACNG2, CACNG3, CACNG4, CACNG8 or GSG1L. This inner core of AMPAR complexes is complemented by outer core constituents binding directly to the GluA/GRIA proteins at sites distinct from the interaction sites of the inner core constituents. Outer core constituents include at least PRRT1, PRRT2, CKAMP44/SHISA9, FRRS1L and NRN1. The proteins of the inner and outer core serve as a platform for other, more peripherally associated AMPAR constituents. Alone or in combination, these auxiliary subunits control the gating and pharmacology of the AMPAR complexes and profoundly impact their biogenesis and protein processing. In terms of tissue distribution, expressed in the brain, including hippocampus (at protein level).

The protein localises to the cell membrane. It localises to the synapse. As a component of the inner core of AMPAR complexes, modifies AMPA receptor (AMPAR) gating. In Mus musculus (Mouse), this protein is Germ cell-specific gene 1-like protein (Gsg1l).